The primary structure comprises 393 residues: Staphopain B (393 aa).

The signal sequence occupies residues 1 to 36 (MNSSCKTRVFNIISIIMVSMLILSLGAFANNNKAKA). Positions 37 to 219 (DSHSKQLEIN…KVEENEAIQE (183 aa)) are excised as a propeptide. Active-site residues include cysteine 243, histidine 340, and asparagine 360.

It belongs to the peptidase C47 family. As to quaternary structure, in the cytoplasm, prematurely activated/folded SspB forms a stable non-covalent complex with SspC. Proteolytically cleaved by staphylococcal serine protease (SspA).

The protein localises to the secreted. With respect to regulation, prematurely activated/folded staphopain B is inhibited by staphostatin B (SspC), which is probably required to protect staphylococcal cytoplasmic proteins from degradation by SspB. Functionally, cysteine protease that plays an important role in the inhibition of host innate immune response. Degrades host elastin, fibrogen, fibronectin and kininogen. Blocks phagocytosis of opsonised S.aureus by neutrophils and monocytes by inducing their death in a proteolytic activity-dependent manner. Decreases surface expression of the 'don't eat me' signal CD31 on neutrophils. Cleaves host galectin-3/LGALS3, thereby inhibiting the neutrophil-activating ability of the lectin. The sequence is that of Staphopain B (sspB) from Staphylococcus aureus (strain MRSA252).